A 110-amino-acid chain; its full sequence is Small ribosomal subunit protein bS18c (110 aa).

Belongs to the bacterial ribosomal protein bS18 family. In terms of assembly, part of the 30S ribosomal subunit.

Its subcellular location is the plastid. It localises to the chloroplast. The protein is Small ribosomal subunit protein bS18c (rps18) of Pisum sativum (Garden pea).